The chain runs to 360 residues: S-adenosylmethionine:tRNA ribosyltransferase-isomerase (360 aa).

It belongs to the QueA family. In terms of assembly, monomer.

It localises to the cytoplasm. The catalysed reaction is 7-aminomethyl-7-carbaguanosine(34) in tRNA + S-adenosyl-L-methionine = epoxyqueuosine(34) in tRNA + adenine + L-methionine + 2 H(+). The protein operates within tRNA modification; tRNA-queuosine biosynthesis. Transfers and isomerizes the ribose moiety from AdoMet to the 7-aminomethyl group of 7-deazaguanine (preQ1-tRNA) to give epoxyqueuosine (oQ-tRNA). This Rhizobium rhizogenes (strain K84 / ATCC BAA-868) (Agrobacterium radiobacter) protein is S-adenosylmethionine:tRNA ribosyltransferase-isomerase.